The chain runs to 255 residues: 4-hydroxy-tetrahydrodipicolinate reductase (255 aa).

Residues 9–14 (GFKGKM), 89–91 (GTT), and 115–118 (APNF) each bind NAD(+). Catalysis depends on histidine 145, which acts as the Proton donor/acceptor. Residue histidine 146 coordinates (S)-2,3,4,5-tetrahydrodipicolinate. The active-site Proton donor is lysine 149. 155–156 (GT) serves as a coordination point for (S)-2,3,4,5-tetrahydrodipicolinate.

The protein belongs to the DapB family.

The protein resides in the cytoplasm. It carries out the reaction (S)-2,3,4,5-tetrahydrodipicolinate + NAD(+) + H2O = (2S,4S)-4-hydroxy-2,3,4,5-tetrahydrodipicolinate + NADH + H(+). It catalyses the reaction (S)-2,3,4,5-tetrahydrodipicolinate + NADP(+) + H2O = (2S,4S)-4-hydroxy-2,3,4,5-tetrahydrodipicolinate + NADPH + H(+). The protein operates within amino-acid biosynthesis; L-lysine biosynthesis via DAP pathway; (S)-tetrahydrodipicolinate from L-aspartate: step 4/4. Catalyzes the conversion of 4-hydroxy-tetrahydrodipicolinate (HTPA) to tetrahydrodipicolinate. The polypeptide is 4-hydroxy-tetrahydrodipicolinate reductase (Streptococcus suis (strain 98HAH33)).